A 1979-amino-acid chain; its full sequence is Repetitive organellar protein (1979 aa).

Basic residues predominate over residues 1–12 (MVFTFKNKKKKK). 2 disordered regions span residues 1 to 42 (MVFT…DSWY) and 54 to 116 (TKYK…NNYS). 2 stretches are compositionally biased toward basic and acidic residues: residues 13–24 (EASSDKVSKESF) and 31–42 (NNEKREKSDSWY). A compositionally biased stretch (low complexity) spans 68–114 (EDIINNNNNNNNDNNNDNNNDNNNDNNNDNNNDNNNENNNDNNNFNN). Coiled-coil stretches lie at residues 127 to 366 (DNEL…LKDE), 412 to 666 (LKVY…EMEL), 693 to 876 (LKES…KKKQ), 992 to 1094 (KKKH…YKTI), 1126 to 1307 (VDKI…MNIK), and 1398 to 1467 (IANY…LTSQ).

It is found in the host cell membrane. In Plasmodium falciparum (isolate 3D7), this protein is Repetitive organellar protein.